Here is a 147-residue protein sequence, read N- to C-terminus: Helix-loop-helix protein 13 (147 aa).

One can recognise a bHLH domain in the interval 41–93 (EERQTASIRERKRMCSINVAFIELRNYIPTFPYEKRLSKIDTLNLAIAYINML).

In terms of tissue distribution, expressed in hermaphrodite dopaminergic neurons (ADE, CEP, and PDE).

The protein resides in the nucleus. It localises to the cytoplasm. Transcriptional activator. Shown to have a role in the negative regulation of exit from L1 arrest and dauer diapause dependent on IIS signaling (insulin and insulin-like growth factor (IGF) signaling). Hypodermal expression is regulated by IIS/daf-16 while neuronal expression is not under the control of IIS/daf-16. The sequence is that of Helix-loop-helix protein 13 from Caenorhabditis elegans.